A 384-amino-acid polypeptide reads, in one-letter code: 1-deoxy-D-xylulose 5-phosphate reductoisomerase (384 aa).

The NADPH site is built by T10, G11, S12, I13, K37, and N124. K125 is a 1-deoxy-D-xylulose 5-phosphate binding site. Residue E126 participates in NADPH binding. A Mn(2+)-binding site is contributed by D150. The 1-deoxy-D-xylulose 5-phosphate site is built by S151, E152, S176, and H199. E152 is a Mn(2+) binding site. Position 205 (G205) interacts with NADPH. Residues S212, N217, K218, and E221 each contribute to the 1-deoxy-D-xylulose 5-phosphate site. E221 contacts Mn(2+).

Belongs to the DXR family. It depends on Mg(2+) as a cofactor. Mn(2+) serves as cofactor.

The enzyme catalyses 2-C-methyl-D-erythritol 4-phosphate + NADP(+) = 1-deoxy-D-xylulose 5-phosphate + NADPH + H(+). It participates in isoprenoid biosynthesis; isopentenyl diphosphate biosynthesis via DXP pathway; isopentenyl diphosphate from 1-deoxy-D-xylulose 5-phosphate: step 1/6. Functionally, catalyzes the NADPH-dependent rearrangement and reduction of 1-deoxy-D-xylulose-5-phosphate (DXP) to 2-C-methyl-D-erythritol 4-phosphate (MEP). The polypeptide is 1-deoxy-D-xylulose 5-phosphate reductoisomerase (Clostridium tetani (strain Massachusetts / E88)).